The primary structure comprises 129 residues: Glycine cleavage system H protein (129 aa).

The Lipoyl-binding domain maps to 23 to 104 (TVTVGITQHA…SYSAWLFKLK (82 aa)). Position 64 is an N6-lipoyllysine (Lys-64).

The protein belongs to the GcvH family. In terms of assembly, the glycine cleavage system is composed of four proteins: P, T, L and H. (R)-lipoate is required as a cofactor.

Its function is as follows. The glycine cleavage system catalyzes the degradation of glycine. The H protein shuttles the methylamine group of glycine from the P protein to the T protein. This Nitrosomonas eutropha (strain DSM 101675 / C91 / Nm57) protein is Glycine cleavage system H protein.